The chain runs to 393 residues: Arrestin-C (393 aa).

Basic and acidic residues predominate over residues 371–386 (FARQEDGGEEKQKALA). A disordered region spans residues 371–393 (FARQEDGGEEKQKALAEEGDEGS).

Belongs to the arrestin family. Homodimer; disulfide-linked in response to retinal illumination. Interacts with CXCR4; the interaction is dependent on the C-terminal phosphorylation of CXCR4 and modulates the calcium ion mobilization activity of CXCR4.

It is found in the photoreceptor inner segment. It localises to the cell projection. The protein resides in the cilium. Its subcellular location is the photoreceptor outer segment. In terms of biological role, may play a role in an as yet undefined retina-specific signal transduction. Could bind to photoactivated-phosphorylated red/green opsins. This is Arrestin-C (ARR3) from Ictidomys tridecemlineatus (Thirteen-lined ground squirrel).